The sequence spans 160 residues: Phosphopantetheine adenylyltransferase (160 aa).

Position 10 (Thr10) interacts with substrate. ATP-binding positions include 10–11 (TF) and His18. Substrate is bound by residues Lys42, Leu74, and Arg88. Residues 89-91 (GLR), Glu99, and 124-130 (NSFISST) each bind ATP.

This sequence belongs to the bacterial CoaD family. As to quaternary structure, homohexamer. Mg(2+) is required as a cofactor.

It localises to the cytoplasm. The enzyme catalyses (R)-4'-phosphopantetheine + ATP + H(+) = 3'-dephospho-CoA + diphosphate. The protein operates within cofactor biosynthesis; coenzyme A biosynthesis; CoA from (R)-pantothenate: step 4/5. Reversibly transfers an adenylyl group from ATP to 4'-phosphopantetheine, yielding dephospho-CoA (dPCoA) and pyrophosphate. This Shewanella piezotolerans (strain WP3 / JCM 13877) protein is Phosphopantetheine adenylyltransferase.